Consider the following 213-residue polypeptide: Chloramphenicol acetyltransferase 2 (213 aa).

The active-site Proton acceptor is H189.

It belongs to the chloramphenicol acetyltransferase family. As to quaternary structure, homotrimer.

It carries out the reaction chloramphenicol + acetyl-CoA = chloramphenicol 3-acetate + CoA. This enzyme is an effector of chloramphenicol resistance in bacteria. The chain is Chloramphenicol acetyltransferase 2 (cmlA) from Escherichia coli.